Here is a 407-residue protein sequence, read N- to C-terminus: DNA primase DnaG (407 aa).

The 77-residue stretch at 172–248 (DWIIVVEGRA…HIDYVARAPP (77 aa)) folds into the Toprim domain. Mg(2+)-binding residues include glutamate 178, aspartate 222, and aspartate 224. Residues 279 to 304 (AGAEKTEAAAPPPQQPTAPPAAPSQQ) are disordered. Residues 288 to 300 (APPPQQPTAPPAA) are compositionally biased toward pro residues.

The protein belongs to the archaeal DnaG primase family. In terms of assembly, forms a ternary complex with MCM helicase and DNA. Component of the archaeal exosome complex. Requires Mg(2+) as cofactor.

It carries out the reaction ssDNA + n NTP = ssDNA/pppN(pN)n-1 hybrid + (n-1) diphosphate.. Functionally, RNA polymerase that catalyzes the synthesis of short RNA molecules used as primers for DNA polymerase during DNA replication. Also part of the exosome, which is a complex involved in RNA degradation. Acts as a poly(A)-binding protein that enhances the interaction between heteromeric, adenine-rich transcripts and the exosome. The polypeptide is DNA primase DnaG (Pyrobaculum calidifontis (strain DSM 21063 / JCM 11548 / VA1)).